A 274-amino-acid chain; its full sequence is Large ribosomal subunit protein uL2 (274 aa).

Disordered regions lie at residues 30–54 (EKSLAFGKKSSGGRNNNGRITIRHK) and 223–274 (VAMN…QLKG). The segment covering 36 to 48 (GKKSSGGRNNNGR) has biased composition (low complexity). Positions 263 to 274 (KFSDKYIKQLKG) are enriched in basic and acidic residues.

It belongs to the universal ribosomal protein uL2 family. In terms of assembly, part of the 50S ribosomal subunit. Forms a bridge to the 30S subunit in the 70S ribosome.

Functionally, one of the primary rRNA binding proteins. Required for association of the 30S and 50S subunits to form the 70S ribosome, for tRNA binding and peptide bond formation. It has been suggested to have peptidyltransferase activity; this is somewhat controversial. Makes several contacts with the 16S rRNA in the 70S ribosome. This chain is Large ribosomal subunit protein uL2, found in Wolbachia sp. subsp. Brugia malayi (strain TRS).